The following is a 151-amino-acid chain: Transcriptional regulator SyrB (151 aa).

The disordered stretch occupies residues 1-61; the sequence is MADESNTGPV…RYSEQERNDK (61 aa). Positions 33–48 are enriched in low complexity; sequence PQKAAAEPAQPKAPAA. The segment covering 52 to 61 has biased composition (basic and acidic residues); it reads RYSEQERNDK.

This sequence belongs to the SyrB family.

Its function is as follows. Responsible for the repression of SyrM activity. The protein is Transcriptional regulator SyrB (syrB) of Rhizobium meliloti (strain 1021) (Ensifer meliloti).